The following is a 285-amino-acid chain: Bifunctional protein FolD (285 aa).

NADP(+) is bound by residues 165 to 167 (GRS) and Ser-190.

This sequence belongs to the tetrahydrofolate dehydrogenase/cyclohydrolase family. Homodimer.

The enzyme catalyses (6R)-5,10-methylene-5,6,7,8-tetrahydrofolate + NADP(+) = (6R)-5,10-methenyltetrahydrofolate + NADPH. It catalyses the reaction (6R)-5,10-methenyltetrahydrofolate + H2O = (6R)-10-formyltetrahydrofolate + H(+). Its pathway is one-carbon metabolism; tetrahydrofolate interconversion. Functionally, catalyzes the oxidation of 5,10-methylenetetrahydrofolate to 5,10-methenyltetrahydrofolate and then the hydrolysis of 5,10-methenyltetrahydrofolate to 10-formyltetrahydrofolate. This is Bifunctional protein FolD from Ligilactobacillus salivarius (strain UCC118) (Lactobacillus salivarius).